A 357-amino-acid polypeptide reads, in one-letter code: Snake venom metalloproteinase H4 (357 aa).

A signal peptide spans 1–6 (FPYQGS). A propeptide spanning residues 7-176 (SIMLESGKVN…KKASQLIVST (170 aa)) is cleaved from the precursor. The Peptidase M12B domain occupies 180–357 (RYMEIVIVVD…EVIKYFLDSK (178 aa)). Position 316 (His-316) interacts with Zn(2+). Residue Glu-317 is part of the active site. Zn(2+)-binding residues include His-320 and His-326. An intrachain disulfide couples Cys-333 to Cys-339.

Belongs to the venom metalloproteinase (M12B) family. P-I subfamily. In terms of assembly, monomer. Zn(2+) serves as cofactor. Expressed by the venom gland.

The protein localises to the secreted. Functionally, snake venom metalloproteinase that impairs hemostasis in the envenomed animal. The polypeptide is Snake venom metalloproteinase H4 (Deinagkistrodon acutus (Hundred-pace snake)).